The sequence spans 383 residues: Succinyl-diaminopimelate desuccinylase (383 aa).

Histidine 70 lines the Zn(2+) pocket. The active site involves aspartate 72. Residue aspartate 103 coordinates Zn(2+). Glutamate 137 acts as the Proton acceptor in catalysis. The Zn(2+) site is built by glutamate 138, glutamate 166, and histidine 352.

It belongs to the peptidase M20A family. DapE subfamily. As to quaternary structure, homodimer. Zn(2+) serves as cofactor. Co(2+) is required as a cofactor.

It carries out the reaction N-succinyl-(2S,6S)-2,6-diaminopimelate + H2O = (2S,6S)-2,6-diaminopimelate + succinate. It participates in amino-acid biosynthesis; L-lysine biosynthesis via DAP pathway; LL-2,6-diaminopimelate from (S)-tetrahydrodipicolinate (succinylase route): step 3/3. Functionally, catalyzes the hydrolysis of N-succinyl-L,L-diaminopimelic acid (SDAP), forming succinate and LL-2,6-diaminopimelate (DAP), an intermediate involved in the bacterial biosynthesis of lysine and meso-diaminopimelic acid, an essential component of bacterial cell walls. In Hahella chejuensis (strain KCTC 2396), this protein is Succinyl-diaminopimelate desuccinylase.